Here is a 244-residue protein sequence, read N- to C-terminus: 3-deoxy-manno-octulosonate cytidylyltransferase (244 aa).

The protein belongs to the KdsB family.

It localises to the cytoplasm. The catalysed reaction is 3-deoxy-alpha-D-manno-oct-2-ulosonate + CTP = CMP-3-deoxy-beta-D-manno-octulosonate + diphosphate. Its pathway is nucleotide-sugar biosynthesis; CMP-3-deoxy-D-manno-octulosonate biosynthesis; CMP-3-deoxy-D-manno-octulosonate from 3-deoxy-D-manno-octulosonate and CTP: step 1/1. It functions in the pathway bacterial outer membrane biogenesis; lipopolysaccharide biosynthesis. Its function is as follows. Activates KDO (a required 8-carbon sugar) for incorporation into bacterial lipopolysaccharide in Gram-negative bacteria. This is 3-deoxy-manno-octulosonate cytidylyltransferase from Ruthia magnifica subsp. Calyptogena magnifica.